The following is a 292-amino-acid chain: Bifunctional protein FolD (292 aa).

Residues 169–171 (GRS) and Ser-194 contribute to the NADP(+) site.

Belongs to the tetrahydrofolate dehydrogenase/cyclohydrolase family. As to quaternary structure, homodimer.

It carries out the reaction (6R)-5,10-methylene-5,6,7,8-tetrahydrofolate + NADP(+) = (6R)-5,10-methenyltetrahydrofolate + NADPH. The enzyme catalyses (6R)-5,10-methenyltetrahydrofolate + H2O = (6R)-10-formyltetrahydrofolate + H(+). The protein operates within one-carbon metabolism; tetrahydrofolate interconversion. Its function is as follows. Catalyzes the oxidation of 5,10-methylenetetrahydrofolate to 5,10-methenyltetrahydrofolate and then the hydrolysis of 5,10-methenyltetrahydrofolate to 10-formyltetrahydrofolate. In Nostoc punctiforme (strain ATCC 29133 / PCC 73102), this protein is Bifunctional protein FolD.